Consider the following 139-residue polypeptide: Phosphoribosyl-AMP cyclohydrolase (139 aa).

Mg(2+) is bound at residue D91. C92 contributes to the Zn(2+) binding site. D93 and D95 together coordinate Mg(2+). Zn(2+)-binding residues include C110 and C117.

This sequence belongs to the PRA-CH family. In terms of assembly, homodimer. Mg(2+) is required as a cofactor. It depends on Zn(2+) as a cofactor.

It localises to the cytoplasm. It catalyses the reaction 1-(5-phospho-beta-D-ribosyl)-5'-AMP + H2O = 1-(5-phospho-beta-D-ribosyl)-5-[(5-phospho-beta-D-ribosylamino)methylideneamino]imidazole-4-carboxamide. It functions in the pathway amino-acid biosynthesis; L-histidine biosynthesis; L-histidine from 5-phospho-alpha-D-ribose 1-diphosphate: step 3/9. Functionally, catalyzes the hydrolysis of the adenine ring of phosphoribosyl-AMP. This is Phosphoribosyl-AMP cyclohydrolase from Brucella canis (strain ATCC 23365 / NCTC 10854 / RM-666).